A 135-amino-acid chain; its full sequence is Small ribosomal subunit protein uS11 (135 aa).

The interval 1–22 (MPPKSRTAAGAKKVRRKEKKNV) is disordered.

Belongs to the universal ribosomal protein uS11 family. Part of the 30S ribosomal subunit. Interacts with proteins S7 and S18. Binds to IF-3.

Located on the platform of the 30S subunit, it bridges several disparate RNA helices of the 16S rRNA. Forms part of the Shine-Dalgarno cleft in the 70S ribosome. This is Small ribosomal subunit protein uS11 from Nocardioides sp. (strain ATCC BAA-499 / JS614).